Here is a 151-residue protein sequence, read N- to C-terminus: MKQIELKILDARIGNEFPLPEYATPGSAGLDLRACLDAAVVLAPGETQLIPTGLAIHIADPGLCATILPRSGLGHKHGIVLGNLVGLIDSDYQGQLMVSVWNRGNTTFTIQPGERIAQLVFMPVVQASFNIVDDFDTSERGEGGFGSSGRH.

Substrate contacts are provided by residues Arg70–Gly72, Asn83, Leu87–Asp89, and Met97.

The protein belongs to the dUTPase family. Mg(2+) is required as a cofactor.

The enzyme catalyses dUTP + H2O = dUMP + diphosphate + H(+). The protein operates within pyrimidine metabolism; dUMP biosynthesis; dUMP from dCTP (dUTP route): step 2/2. In terms of biological role, this enzyme is involved in nucleotide metabolism: it produces dUMP, the immediate precursor of thymidine nucleotides and it decreases the intracellular concentration of dUTP so that uracil cannot be incorporated into DNA. This is Deoxyuridine 5'-triphosphate nucleotidohydrolase from Tolumonas auensis (strain DSM 9187 / NBRC 110442 / TA 4).